Consider the following 154-residue polypeptide: Putative pre-16S rRNA nuclease (154 aa).

It belongs to the YqgF nuclease family.

Its subcellular location is the cytoplasm. Its function is as follows. Could be a nuclease involved in processing of the 5'-end of pre-16S rRNA. The protein is Putative pre-16S rRNA nuclease of Rickettsia felis (strain ATCC VR-1525 / URRWXCal2) (Rickettsia azadi).